The primary structure comprises 126 residues: Probable 4-amino-4-deoxy-L-arabinose-phosphoundecaprenol flippase subunit ArnF (126 aa).

The Cytoplasmic segment spans residues 1–4; it reads MKGY. The helical transmembrane segment at 5–25 threads the bilayer; that stretch reads IWGLISVLLVTIAQLLLKWGV. Residues 26-49 lie on the Periplasmic side of the membrane; it reads VNLPALNLGLHWFDIEWLWSHRHS. A helical transmembrane segment spans residues 50 to 70; that stretch reads LVAVMAGLAGYLLSMLCWLFT. Residues 71 to 79 are Cytoplasmic-facing; that stretch reads LKYLPLNKA. Residues 80–100 form a helical membrane-spanning segment; that stretch reads YPLISLSYVFVYLMVALLPWF. Topologically, residues 101–102 are periplasmic; that stretch reads NE. Residues 103 to 123 form a helical membrane-spanning segment; the sequence is TITLLKTAGVIFILYGVWLIS. Over 124–126 the chain is Cytoplasmic; the sequence is RPE.

It belongs to the ArnF family. Heterodimer of ArnE and ArnF.

The protein localises to the cell inner membrane. It functions in the pathway bacterial outer membrane biogenesis; lipopolysaccharide biosynthesis. Functionally, translocates 4-amino-4-deoxy-L-arabinose-phosphoundecaprenol (alpha-L-Ara4N-phosphoundecaprenol) from the cytoplasmic to the periplasmic side of the inner membrane. This chain is Probable 4-amino-4-deoxy-L-arabinose-phosphoundecaprenol flippase subunit ArnF, found in Photorhabdus laumondii subsp. laumondii (strain DSM 15139 / CIP 105565 / TT01) (Photorhabdus luminescens subsp. laumondii).